We begin with the raw amino-acid sequence, 164 residues long: Phosphopantetheine adenylyltransferase (164 aa).

Belongs to the eukaryotic CoaD family.

The protein resides in the cytoplasm. It carries out the reaction (R)-4'-phosphopantetheine + ATP + H(+) = 3'-dephospho-CoA + diphosphate. The protein operates within cofactor biosynthesis; coenzyme A biosynthesis. Functionally, reversibly transfers an adenylyl group from ATP to 4'-phosphopantetheine, yielding dephospho-CoA (dPCoA) and pyrophosphate. This Methanothermobacter thermautotrophicus (strain ATCC 29096 / DSM 1053 / JCM 10044 / NBRC 100330 / Delta H) (Methanobacterium thermoautotrophicum) protein is Phosphopantetheine adenylyltransferase.